An 85-amino-acid chain; its full sequence is MAKTQSPLQWLATTLIRGYQVFISPFLGANKCRFHPTCSTYAIEAIRLHGSVKGCWLAARRILKCHPLHPGGIDPVPPKTHRCNK.

It belongs to the UPF0161 family.

It is found in the cell inner membrane. Functionally, could be involved in insertion of integral membrane proteins into the membrane. The protein is Putative membrane protein insertion efficiency factor of Shewanella woodyi (strain ATCC 51908 / MS32).